A 309-amino-acid chain; its full sequence is Protein-L-isoaspartate O-methyltransferase (309 aa).

The tract at residues 1–46 (MSGERAKRFPLALEDLKRAPRKSDGRAGERHAAIAAPKAADKPAAV) is disordered. The span at 14 to 32 (EDLKRAPRKSDGRAGERHA) shows a compositional bias: basic and acidic residues. Low complexity predominate over residues 33 to 46 (AIAAPKAADKPAAV). Serine 156 is a catalytic residue.

The protein belongs to the methyltransferase superfamily. L-isoaspartyl/D-aspartyl protein methyltransferase family.

The protein resides in the cytoplasm. The enzyme catalyses [protein]-L-isoaspartate + S-adenosyl-L-methionine = [protein]-L-isoaspartate alpha-methyl ester + S-adenosyl-L-homocysteine. In terms of biological role, catalyzes the methyl esterification of L-isoaspartyl residues in peptides and proteins that result from spontaneous decomposition of normal L-aspartyl and L-asparaginyl residues. It plays a role in the repair and/or degradation of damaged proteins. The polypeptide is Protein-L-isoaspartate O-methyltransferase (Burkholderia vietnamiensis (strain G4 / LMG 22486) (Burkholderia cepacia (strain R1808))).